The primary structure comprises 531 residues: Type 2 DNA topoisomerase 6 subunit B (531 aa).

ATP contacts are provided by residues N42, D76, 97-98, 106-113, and K427; these read SK and GMYGLGVK.

The protein belongs to the TOP6B family. In terms of assembly, homodimer. Heterotetramer of two Top6A and two Top6B chains.

It carries out the reaction ATP-dependent breakage, passage and rejoining of double-stranded DNA.. Its function is as follows. Relaxes both positive and negative superturns and exhibits a strong decatenase activity. The sequence is that of Type 2 DNA topoisomerase 6 subunit B from Metallosphaera sedula (strain ATCC 51363 / DSM 5348 / JCM 9185 / NBRC 15509 / TH2).